The primary structure comprises 125 residues: Cytochrome c oxidase assembly factor 6 homolog (125 aa).

Gly2 carries the post-translational modification N-acetylalanine. The 44-residue stretch at 55–98 (RQVCWGARDEYWKCLDENLEDASQCKKLRSSFESSCPQQWIKYF) folds into the CHCH domain. The Cx9C motif signature appears at 58-68 (CWGARDEYWKC). Intrachain disulfides connect Cys58–Cys90 and Cys68–Cys79. The Cx10C motif signature appears at 79-90 (CKKLRSSFESSC).

It belongs to the cytochrome c oxidase subunit 6B family. As to quaternary structure, interacts with COA1. Found in a complex with TMEM177, COX20, MT-CO2/COX2, COX18, SCO1 and SCO2. Interacts with MT-CO2/COX2 and SCO2. Interacts with SCO1. Interacts with COX20 in a MT-CO2/COX2- and COX18-dependent manner. Interacts with COX16.

It is found in the mitochondrion intermembrane space. In terms of biological role, involved in the maturation of the mitochondrial respiratory chain complex IV subunit MT-CO2/COX2. Thereby, may regulate early steps of complex IV assembly. Mitochondrial respiratory chain complex IV or cytochrome c oxidase is the component of the respiratory chain that catalyzes the transfer of electrons from intermembrane space cytochrome c to molecular oxygen in the matrix and as a consequence contributes to the proton gradient involved in mitochondrial ATP synthesis. May also be required for efficient formation of respiratory supercomplexes comprised of complexes III and IV. This Homo sapiens (Human) protein is Cytochrome c oxidase assembly factor 6 homolog (COA6).